A 342-amino-acid polypeptide reads, in one-letter code: Anthranilate phosphoribosyltransferase (342 aa).

5-phospho-alpha-D-ribose 1-diphosphate-binding positions include G83, G86–D87, T91, N93–T96, K111–S119, and A123. G83 is an anthranilate binding site. S95 contacts Mg(2+). An anthranilate-binding site is contributed by R169. Mg(2+)-binding residues include D228 and E229.

This sequence belongs to the anthranilate phosphoribosyltransferase family. Homodimer. Mg(2+) serves as cofactor.

It carries out the reaction N-(5-phospho-beta-D-ribosyl)anthranilate + diphosphate = 5-phospho-alpha-D-ribose 1-diphosphate + anthranilate. Its pathway is amino-acid biosynthesis; L-tryptophan biosynthesis; L-tryptophan from chorismate: step 2/5. In terms of biological role, catalyzes the transfer of the phosphoribosyl group of 5-phosphorylribose-1-pyrophosphate (PRPP) to anthranilate to yield N-(5'-phosphoribosyl)-anthranilate (PRA). The chain is Anthranilate phosphoribosyltransferase from Neisseria gonorrhoeae (strain ATCC 700825 / FA 1090).